We begin with the raw amino-acid sequence, 458 residues long: Vasoactive intestinal polypeptide receptor 1 (458 aa).

Residues 1-31 form the signal peptide; it reads MRPLSPPPAGWFCVLAGVLACVLGPVGSWAV. Residues 32–142 lie on the Extracellular side of the membrane; that stretch reads GLQQEECDYL…DEQQTVFYNS (111 aa). 5 disulfides stabilise this stretch: C38–C209, C51–C73, C64–C106, C87–C123, and C216–C286. N59, N70, N101, and N105 each carry an N-linked (GlcNAc...) asparagine glycan. A helical membrane pass occupies residues 143–167; the sequence is VKTGYTIGYSLSLAALLVATAILSL. The Cytoplasmic portion of the chain corresponds to 168–175; the sequence is FRKLHCTR. The chain crosses the membrane as a helical span at residues 176 to 197; that stretch reads NYIHMHLFISFILRATAVFIKD. The Extracellular portion of the chain corresponds to 198–217; sequence LALFDSEESDHCSKGSVGCK. A helical membrane pass occupies residues 218–242; that stretch reads AAVVLFQYCVMANFFWLLVEGLYLH. Residues 243 to 255 lie on the Cytoplasmic side of the membrane; the sequence is TLLAVSFFSERKY. A helical membrane pass occupies residues 256–277; the sequence is FWGYIFVGWGVPSTFIMVWTVV. Residues 278-292 are Extracellular-facing; that stretch reads RIHFEDYGCWDTIHS. The chain crosses the membrane as a helical span at residues 293-317; sequence SLWWIIKAPILASILVNFILFIRII. Topologically, residues 318 to 339 are cytoplasmic; sequence GILVQKLRPPDVGKSDNSPYSR. The chain crosses the membrane as a helical span at residues 340-360; the sequence is LAKSTLLLIPLFGVHYIMFAF. At 361-368 the chain is on the extracellular side; that stretch reads FPDNFKAE. The helical transmembrane segment at 369-392 threads the bilayer; it reads VKMVFELIVGSFQGCVVAILYCFL. Over 393-458 the chain is Cytoplasmic; that stretch reads NGEVQAELRR…SSFQAEVSLV (66 aa).

The protein belongs to the G-protein coupled receptor 2 family. As to quaternary structure, interacts with ADCYAP1/PACAP; activated by both PACAP27 and PACAP38 neuropeptides. Interacts with VIP; the interaction results in VIPR1 activation.

It localises to the cell membrane. Its function is as follows. G protein-coupled receptor activated by the neuropeptides vasoactive intestinal peptide (VIP) and pituitary adenylate cyclase-activating polypeptide (ADCYAP1/PACAP). Binds VIP and both PACAP27 and PACAP38 bioactive peptides with the following order of ligand affinity VIP = PACAP27 &gt; PACAP38. Ligand binding causes a conformation change that triggers signaling via guanine nucleotide-binding proteins (G proteins) and modulates the activity of downstream effectors. Activates cAMP-dependent pathway. The polypeptide is Vasoactive intestinal polypeptide receptor 1 (VIPR1) (Sus scrofa (Pig)).